Reading from the N-terminus, the 327-residue chain is Methionyl-tRNA formyltransferase (327 aa).

121–124 (SLLP) lines the (6S)-5,6,7,8-tetrahydrofolate pocket.

Belongs to the Fmt family.

The catalysed reaction is L-methionyl-tRNA(fMet) + (6R)-10-formyltetrahydrofolate = N-formyl-L-methionyl-tRNA(fMet) + (6S)-5,6,7,8-tetrahydrofolate + H(+). Functionally, attaches a formyl group to the free amino group of methionyl-tRNA(fMet). The formyl group appears to play a dual role in the initiator identity of N-formylmethionyl-tRNA by promoting its recognition by IF2 and preventing the misappropriation of this tRNA by the elongation apparatus. The sequence is that of Methionyl-tRNA formyltransferase from Burkholderia ambifaria (strain MC40-6).